A 592-amino-acid polypeptide reads, in one-letter code: Protein phosphatase EYA1 (592 aa).

Disordered stretches follow at residues 1–95 (MEMQ…RPYP) and 240–320 (MTSS…PDSD). The segment covering 8 to 26 (SPHSRLSGSSESPSGPKLG) has biased composition (low complexity). Residues 28–63 (SHINSNSMTPNGTEVKTEPMSSSETASTTADGSLNN) show a composition bias toward polar residues. 2 stretches are compositionally biased toward low complexity: residues 64-75 (FSGSAIGSSSFS) and 241-253 (TSSN…PSTN). The segment covering 254-287 (ATYQLQEPPSGITSQAVTDPTAEYSTIHSPSTPI) has biased composition (polar residues). The span at 288 to 303 (KDSDSDRLRRGSDGKS) shows a compositional bias: basic and acidic residues. Asp-328 functions as the Nucleophile in the catalytic mechanism. Residues Asp-328, Asp-330, and Asp-556 each contribute to the Mg(2+) site. Asp-330 (proton donor) is an active-site residue.

The protein belongs to the HAD-like hydrolase superfamily. EYA family. In terms of assembly, probably interacts with SIX2, SIX4 and SIX5. Interacts with H2AX in response to DNA damage. Interacts with SIX3; promotes EYA1 translocation to the nucleus. It depends on Mg(2+) as a cofactor. Sumoylated with SUMO1. In the embryo, highly expressed in kidney with lower levels in brain. Weakly expressed in lung. In the adult, highly expressed in heart and skeletal muscle. Weakly expressed in brain and liver. No expression in eye or kidney.

The protein localises to the cytoplasm. Its subcellular location is the nucleus. It carries out the reaction O-phospho-L-tyrosyl-[protein] + H2O = L-tyrosyl-[protein] + phosphate. It catalyses the reaction O-phospho-L-seryl-[protein] + H2O = L-seryl-[protein] + phosphate. The catalysed reaction is O-phospho-L-threonyl-[protein] + H2O = L-threonyl-[protein] + phosphate. In terms of biological role, functions both as protein phosphatase and as transcriptional coactivator for SIX1, and probably also for SIX2, SIX4 and SIX5. Tyrosine phosphatase that dephosphorylates 'Tyr-142' of histone H2AX (H2AXY142ph) and promotes efficient DNA repair via the recruitment of DNA repair complexes containing MDC1. 'Tyr-142' phosphorylation of histone H2AX plays a central role in DNA repair and acts as a mark that distinguishes between apoptotic and repair responses to genotoxic stress. Its function as histone phosphatase may contribute to its function in transcription regulation during organogenesis. Also has phosphatase activity with proteins phosphorylated on Ser and Thr residues (in vitro). Required for normal embryonic development of the craniofacial and trunk skeleton, kidneys and ears. Together with SIX1, it plays an important role in hypaxial muscle development; in this it is functionally redundant with EYA2. The chain is Protein phosphatase EYA1 (EYA1) from Homo sapiens (Human).